Reading from the N-terminus, the 374-residue chain is Ras-related GTP-binding protein B (374 aa).

M1 is subject to N-acetylmethionine. Over residues 1-15 the composition is skewed to basic and acidic residues; the sequence is MEESDSEKKTEKENV. The tract at residues 1 to 30 is disordered; that stretch reads MEESDSEKKTEKENVGPKVEPPLGEPEGSL. S49 and G50 together coordinate GTP. Residues G50, S51, G52, K53, T54, S55, T69, and T75 each contribute to the GDP site. The GTP site is built by G52, K53, T54, S55, T69, T75, G126, and H188. The GDP site is built by H188 and D191. K203 is covalently cross-linked (Glycyl lysine isopeptide (Lys-Gly) (interchain with G-Cter in ubiquitin)). L209 and I225 together coordinate GDP. Residue I225 coordinates GTP. Residues K281, K291, and K305 each participate in a glycyl lysine isopeptide (Lys-Gly) (interchain with G-Cter in ubiquitin) cross-link.

Belongs to the GTR/RAG GTP-binding protein family. As to quaternary structure, interacts with RRAGC and RRAGD; heterodimerization stabilizes RRAG proteins. The GTP-bound form of RRAGB (in complex with the GDP-bound form of RRAGC or RRAGD) interacts with RPTOR, thereby promoting recruitment of mTORC1 to the lysosomes. Component of the lysosomal folliculin complex (LFC), composed of FLCN, FNIP1 (or FNIP2), RagA/RRAGA or RagB/RRAGB GDP-bound, RagC/RRAGC or RagD/RRAGD GTP-bound, and Ragulator. Interacts with SH3BP4; the interaction with this negative regulator is most probably direct, preferentially occurs with the inactive GDP-bound form of RRAGB, is negatively regulated by amino acids and prevents interaction with RPTOR. Interacts with the GATOR1 complex; inactivates RRAGB. The Rag heterodimer interacts with SLC38A9; the probable amino acid sensor. Interacts with SESN1, SESN2 and SESN3.

The protein resides in the cytoplasm. It localises to the lysosome membrane. It catalyses the reaction GTP + H2O = GDP + phosphate + H(+). With respect to regulation, the activation of GTP-binding proteins is generally mediated by a guanine exchange factor (GEF), while inactivation through hydrolysis of bound GTP is catalyzed by a GTPase activating protein (GAP). The Ragulator complex functions as a GEF and promotes the active GTP-bound form. The GATOR1 complex functions as a GAP and stimulates RRAGB GTPase activity to turn it into its inactive GDP-bound form, preventing mTORC1 recruitment and activation. Functionally, guanine nucleotide-binding protein that plays a crucial role in the cellular response to amino acid availability through regulation of the mTORC1 signaling cascade. Forms heterodimeric Rag complexes with RagC/RRAGC or RagD/RRAGD and cycles between an inactive GDP-bound and an active GTP-bound form: RagB/RRAGB is in its active form when GTP-bound RagB/RRAGB forms a complex with GDP-bound RagC/RRAGC (or RagD/RRAGD) and in an inactive form when GDP-bound RagB/RRAGB heterodimerizes with GTP-bound RagC/RRAGC (or RagD/RRAGD). In its GTP-bound active form, promotes the recruitment of mTORC1 to the lysosomes and its subsequent activation by the GTPase RHEB. Involved in the RCC1/Ran-GTPase pathway. This chain is Ras-related GTP-binding protein B, found in Mus musculus (Mouse).